A 323-amino-acid polypeptide reads, in one-letter code: tRNA U34 carboxymethyltransferase (323 aa).

Carboxy-S-adenosyl-L-methionine-binding positions include lysine 91, tryptophan 105, lysine 110, glycine 130, 181–182 (IE), methionine 196, tyrosine 200, and arginine 315.

Belongs to the class I-like SAM-binding methyltransferase superfamily. CmoB family. As to quaternary structure, homotetramer.

The enzyme catalyses carboxy-S-adenosyl-L-methionine + 5-hydroxyuridine(34) in tRNA = 5-carboxymethoxyuridine(34) in tRNA + S-adenosyl-L-homocysteine + H(+). Functionally, catalyzes carboxymethyl transfer from carboxy-S-adenosyl-L-methionine (Cx-SAM) to 5-hydroxyuridine (ho5U) to form 5-carboxymethoxyuridine (cmo5U) at position 34 in tRNAs. The polypeptide is tRNA U34 carboxymethyltransferase (Edwardsiella ictaluri (strain 93-146)).